A 507-amino-acid chain; its full sequence is ATP synthase subunit alpha, chloroplastic (507 aa).

Residue 170 to 177 (GDRQTGKT) coordinates ATP.

This sequence belongs to the ATPase alpha/beta chains family. In terms of assembly, F-type ATPases have 2 components, CF(1) - the catalytic core - and CF(0) - the membrane proton channel. CF(1) has five subunits: alpha(3), beta(3), gamma(1), delta(1), epsilon(1). CF(0) has four main subunits: a, b, b' and c.

The protein resides in the plastid. The protein localises to the chloroplast thylakoid membrane. It catalyses the reaction ATP + H2O + 4 H(+)(in) = ADP + phosphate + 5 H(+)(out). Produces ATP from ADP in the presence of a proton gradient across the membrane. The alpha chain is a regulatory subunit. This Lemna minor (Common duckweed) protein is ATP synthase subunit alpha, chloroplastic.